The sequence spans 308 residues: HTH-type transcriptional activator AllS (308 aa).

The HTH lysR-type domain maps to 2–59; that stretch reads FDPETLRTFIAVAETGSFSKAAERLCKTTATISYRIKLLEENTGVALFFRTTRSVTLT. The segment at residues 19 to 38 is a DNA-binding region (H-T-H motif); sequence FSKAAERLCKTTATISYRIK.

This sequence belongs to the LysR transcriptional regulatory family.

Its function is as follows. Positive regulator essential for the expression of allD operon. Binds to the allD promoter. The protein is HTH-type transcriptional activator AllS (allS) of Escherichia coli O6:K15:H31 (strain 536 / UPEC).